We begin with the raw amino-acid sequence, 165 residues long: MDPVNFIKTYAPRGSIIFINYTMSLTSHLNPSIEKHVGIYYGTLLSEHLVVESTYRKGVRIVPLDSFFEGYLSAKVYMLENIQVMKIAADTSLTLLGIPYGFGHDRMYCFKLVADCYKNAGIDTSSKRILGKDIFLSQNFTDDNRWIKIYDSNNLTFWQIDYLKG.

Belongs to the orthopoxvirus OPG091 family.

Its subcellular location is the virion. It localises to the host cytoplasm. Contributes to vaccinia virus virulence in mice but not to replication in cell culture. In Vaccinia virus (strain Western Reserve) (VACV), this protein is Protein OPG091 (OPG091).